The sequence spans 164 residues: UPF0178 protein BRADO3147 (164 aa).

It belongs to the UPF0178 family.

In Bradyrhizobium sp. (strain ORS 278), this protein is UPF0178 protein BRADO3147.